Here is a 224-residue protein sequence, read N- to C-terminus: uncharacterized protein (224 aa).

The first 17 residues, 1 to 17 (MFTILLYFLVLFWVTNA), serve as a signal peptide directing secretion.

This is an uncharacterized protein from Caenorhabditis elegans.